We begin with the raw amino-acid sequence, 87 residues long: Beta-toxin Cn4 (87 aa).

The N-terminal stretch at 1–19 is a signal peptide; that stretch reads MNSLLMITACLALVGTVWA. An LCN-type CS-alpha/beta domain is found at 20–85; that stretch reads KEGYLVNSYT…VWPLKNKTCN (66 aa). Disulfide bonds link cysteine 31–cysteine 84, cysteine 35–cysteine 60, cysteine 44–cysteine 65, and cysteine 48–cysteine 67. Asparagine 85 carries the asparagine amide modification.

This sequence belongs to the long (4 C-C) scorpion toxin superfamily. Sodium channel inhibitor family. Beta subfamily. Expressed by the venom gland.

It is found in the secreted. Its function is as follows. Beta toxins bind voltage-independently at site-4 of sodium channels (Nav) and shift the voltage of activation toward more negative potentials thereby affecting sodium channel activation and promoting spontaneous and repetitive firing. This toxin affects the activation mechanism of sodium channels of squid axon. It also competes with Cn2 in rat brain synaptosomes. Is lethal to mice. The sequence is that of Beta-toxin Cn4 from Centruroides noxius (Mexican scorpion).